Consider the following 92-residue polypeptide: RNA-binding protein Hfq (92 aa).

Positions 9–68 constitute a Sm domain; the sequence is DPFLNALRRERVPVSIYLVNGIKLQGQVESFDQFVILLKNTVSQMVYKHAISTVVPSRPF. Residues 73–82 are compositionally biased toward polar residues; it reads HQATNAQAGY. The segment at 73 to 92 is disordered; the sequence is HQATNAQAGYNAQHDDGDEK.

This sequence belongs to the Hfq family. In terms of assembly, homohexamer.

RNA chaperone that binds small regulatory RNA (sRNAs) and mRNAs to facilitate mRNA translational regulation in response to envelope stress, environmental stress and changes in metabolite concentrations. Also binds with high specificity to tRNAs. This Shewanella pealeana (strain ATCC 700345 / ANG-SQ1) protein is RNA-binding protein Hfq.